Consider the following 628-residue polypeptide: Keratin, type II cytoskeletal 3 (628 aa).

The interval 1-21 (MSRQASKTSGGGSQGFSGRSA) is disordered. The head stretch occupies residues 1–197 (MSRQASKTSG…DPQIGQVKAQ (197 aa)). Serine 13 and serine 56 each carry phosphoserine. The coil 1A stretch occupies residues 198-233 (EREQIKTLNNKFASFIDKVRFLEQQNKVLETKWNLL). Residues 198 to 513 (EREQIKTLNN…KLLEGEEYRM (316 aa)) form the IF rod domain. Positions 234–254 (QQQGTSSISGTNNLEPLFENH) are linker 1. A coil 1B region spans residues 255 to 346 (INYLRSYLDN…TLYDAELSQM (92 aa)). Residue lysine 296 is modified to N6,N6-dimethyllysine. Residues 347-370 (QSHISDTSVVLSMDNNRSLDLDSI) form a linker 12 region. At serine 364 the chain carries Phosphoserine. Positions 371–509 (IAEVRAQYED…ATYRKLLEGE (139 aa)) are coil 2. Positions 510–628 (EYRMSGECPS…SSQSSQRYSR (119 aa)) are tail. Residues 605–628 (SSASNRGGSIKFSQSSQSSQRYSR) form a disordered region. The span at 617 to 628 (SQSSQSSQRYSR) shows a compositional bias: low complexity.

The protein belongs to the intermediate filament family. As to quaternary structure, heterotetramer of two type I and two type II keratins. Keratin-3 associates with keratin-12. As to expression, cornea specific.

This is Keratin, type II cytoskeletal 3 (KRT3) from Homo sapiens (Human).